A 184-amino-acid polypeptide reads, in one-letter code: Calmodulin-related protein (184 aa).

EF-hand domains lie at aspartate 8 to asparagine 43, proline 44 to aspartate 79, aspartate 81 to lysine 116, and leucine 117 to arginine 152. Ca(2+) is bound by residues aspartate 21, aspartate 23, aspartate 25, cysteine 27, glutamate 32, aspartate 57, aspartate 59, asparagine 61, threonine 63, glutamate 68, aspartate 94, aspartate 96, asparagine 98, and glutamate 105. Lysine 116 carries the N6,N6,N6-trimethyllysine modification. Aspartate 130, aspartate 132, aspartate 134, glutamine 136, and glutamate 141 together coordinate Ca(2+). Residues glutamate 156–leucine 184 are disordered. Over residues serine 161 to asparagine 170 the composition is skewed to low complexity. The span at asparagine 171 to leucine 184 shows a compositional bias: basic residues.

Belongs to the calmodulin family.

Its function is as follows. Calmodulin mediates the control of a large number of enzymes, ion channels and other proteins by Ca(2+). Among the enzymes to be stimulated by the calmodulin-Ca(2+) complex are a number of protein kinases and phosphatases. In Petunia hybrida (Petunia), this protein is Calmodulin-related protein (CAM53).